A 341-amino-acid polypeptide reads, in one-letter code: Small ribosomal subunit protein uS3 (341 aa).

One can recognise a KH type-2 domain in the interval 38 to 106 (IRRMMTRGME…QVQLNILEVK (69 aa)). Disordered regions lie at residues 224–246 (RAVRGRSARREQPAAESPALETA) and 274–341 (PAGQ…TKEG). 2 stretches are compositionally biased toward low complexity: residues 285–303 (AEQPVVTAEPAAAAAVTGE) and 311–333 (AAPAEPTTSAAAEEAPGGADAPS).

This sequence belongs to the universal ribosomal protein uS3 family. In terms of assembly, part of the 30S ribosomal subunit. Forms a tight complex with proteins S10 and S14.

In terms of biological role, binds the lower part of the 30S subunit head. Binds mRNA in the 70S ribosome, positioning it for translation. The protein is Small ribosomal subunit protein uS3 of Acidothermus cellulolyticus (strain ATCC 43068 / DSM 8971 / 11B).